A 334-amino-acid chain; its full sequence is Probable peptidoglycan endopeptidase LytE (334 aa).

The N-terminal stretch at 1–25 is a signal peptide; that stretch reads MKKQIITATTAVVLGSTLFAGAASA. LysM domains are found at residues 26–69, 86–129, and 149–192; these read QSIK…TLSI, STYK…VLKL, and STYK…VLKV. Disordered regions lie at residues 70–89, 131–153, and 195–215; these read NGKSTSSKSSSSSSSSSTYK, GSTSSSSSSSSKVSSSSTSTYKV, and TSTSSSKPASSSSSSSSKTSS. Low complexity-rich tracts occupy residues 72 to 87 and 132 to 153; these read KSTSSKSSSSSSSSST and STSSSSSSSSKVSSSSTSTYKV. In terms of domain architecture, NlpC/P60 spans 217-334; it reads SLNVSKLVSD…KPRYLGAKRF (118 aa). Cysteine 247 serves as the catalytic Nucleophile. Histidine 296 (proton acceptor) is an active-site residue. Residue histidine 308 is part of the active site.

The protein belongs to the peptidase C40 family.

It is found in the secreted. The protein resides in the cell wall. Its function is as follows. Cell wall hydrolase that cleaves gamma-D-glutamate-meso-diaminopimelate bonds in peptidoglycan. Seems to play a role in cell separation during vegetative growth. This chain is Probable peptidoglycan endopeptidase LytE (lytE), found in Bacillus subtilis (strain 168).